We begin with the raw amino-acid sequence, 325 residues long: Serine/threonine-protein phosphatase 2A activator 1 (325 aa).

It belongs to the PTPA-type PPIase family.

The protein localises to the cytoplasm. It is found in the nucleus. It carries out the reaction [protein]-peptidylproline (omega=180) = [protein]-peptidylproline (omega=0). Its function is as follows. PPIases accelerate the folding of proteins. It catalyzes the cis-trans isomerization of proline imidic peptide bonds in oligopeptides. Acts as a regulatory subunit for PP2A-like phosphatases modulating their activity or substrate specificity, probably by inducing a conformational change in the catalytic subunit, a direct target of the PPIase. Can reactivate inactive phosphatase PP2A-phosphatase methylesterase complexes (PP2Ai) in presence of ATP and Mg(2+) by dissociating the inactive form from the complex. This Schizosaccharomyces pombe (strain 972 / ATCC 24843) (Fission yeast) protein is Serine/threonine-protein phosphatase 2A activator 1 (rrd1).